The sequence spans 292 residues: Putative pyruvate, phosphate dikinase regulatory protein (292 aa).

Residue 155–162 (GVSRSSKT) participates in ADP binding.

It belongs to the pyruvate, phosphate/water dikinase regulatory protein family. PDRP subfamily.

The enzyme catalyses N(tele)-phospho-L-histidyl/L-threonyl-[pyruvate, phosphate dikinase] + ADP = N(tele)-phospho-L-histidyl/O-phospho-L-threonyl-[pyruvate, phosphate dikinase] + AMP + H(+). It catalyses the reaction N(tele)-phospho-L-histidyl/O-phospho-L-threonyl-[pyruvate, phosphate dikinase] + phosphate + H(+) = N(tele)-phospho-L-histidyl/L-threonyl-[pyruvate, phosphate dikinase] + diphosphate. Functionally, bifunctional serine/threonine kinase and phosphorylase involved in the regulation of the pyruvate, phosphate dikinase (PPDK) by catalyzing its phosphorylation/dephosphorylation. This is Putative pyruvate, phosphate dikinase regulatory protein from Acidiphilium cryptum (strain JF-5).